The primary structure comprises 192 residues: Ribosomal RNA small subunit methyltransferase G (192 aa).

Residues glycine 63, leucine 68, 112-113 (IE), and arginine 125 contribute to the S-adenosyl-L-methionine site.

This sequence belongs to the methyltransferase superfamily. RNA methyltransferase RsmG family.

Its subcellular location is the cytoplasm. It carries out the reaction guanosine(527) in 16S rRNA + S-adenosyl-L-methionine = N(7)-methylguanosine(527) in 16S rRNA + S-adenosyl-L-homocysteine. Its function is as follows. Specifically methylates the N7 position of guanine in position 527 of 16S rRNA. The polypeptide is Ribosomal RNA small subunit methyltransferase G (Rickettsia africae (strain ESF-5)).